A 475-amino-acid chain; its full sequence is Zinc finger protein 383 (475 aa).

In terms of domain architecture, KRAB spans 6–77 (VMFSDVSIDF…GRELTRGLCS (72 aa)). 11 C2H2-type zinc fingers span residues 170–192 (FECKKCGKAFSQNSQFIQHQRIH), 198–220 (YECKECGKFFSCGSHVTRHLKIH), 226–248 (FECKECGKAFSCSSYLSQHQRIH), 254–276 (YECKECGKAFSYCSNLIDHQRIH), 282–304 (YACKVCGKAFTKSSQLFQHVRIH), 310–332 (YECKECGKAFTQSSKLVQHQRIH), 338–360 (YECKECGKAFSSGSALTNHQRIH), 366–388 (YDCKECGKAFTQSSQLRQHQRIH), 394–416 (FECLECGKAFTQNSQLFQHQRIH), 422–444 (YECNECGKAFNKCSNLTRHLRIH), and 450–472 (YNCKECGKAFSSGSDLIRHQGIH).

This sequence belongs to the krueppel C2H2-type zinc-finger protein family.

It localises to the nucleus. It is found in the cytoplasm. Its function is as follows. May function as a transcriptional repressor, suppressing transcriptional activities mediated by MAPK signaling pathways. In Macaca fascicularis (Crab-eating macaque), this protein is Zinc finger protein 383 (ZNF383).